Consider the following 161-residue polypeptide: SsrA-binding protein (161 aa).

Belongs to the SmpB family.

It is found in the cytoplasm. Its function is as follows. Required for rescue of stalled ribosomes mediated by trans-translation. Binds to transfer-messenger RNA (tmRNA), required for stable association of tmRNA with ribosomes. tmRNA and SmpB together mimic tRNA shape, replacing the anticodon stem-loop with SmpB. tmRNA is encoded by the ssrA gene; the 2 termini fold to resemble tRNA(Ala) and it encodes a 'tag peptide', a short internal open reading frame. During trans-translation Ala-aminoacylated tmRNA acts like a tRNA, entering the A-site of stalled ribosomes, displacing the stalled mRNA. The ribosome then switches to translate the ORF on the tmRNA; the nascent peptide is terminated with the 'tag peptide' encoded by the tmRNA and targeted for degradation. The ribosome is freed to recommence translation, which seems to be the essential function of trans-translation. In Mycolicibacterium smegmatis (strain ATCC 700084 / mc(2)155) (Mycobacterium smegmatis), this protein is SsrA-binding protein.